The chain runs to 362 residues: Ferredoxin--NADP reductase, leaf isozyme 1, chloroplastic (362 aa).

The N-terminal 36 residues, 1 to 36, are a transit peptide targeting the chloroplast; that stretch reads MAAVTAAAVSTSAAAAVTKASPSPAHCFLPCPPRTR. Residues 83–205 enclose the FAD-binding FR-type domain; that stretch reads KEPYVGKCLL…TGPVGKEMLM (123 aa). FAD-binding positions include 141 to 144, 162 to 164, Tyr-168, 179 to 181, and Thr-220; these read RLYS, CVK, and VCS. NADP(+) is bound by residues Ser-144 and Lys-164. A disulfide bridge links Cys-180 with Cys-185. The residue at position 181 (Ser-181) is a Phosphoserine. Residues Thr-220, 252–253, 282–283, Lys-292, 321–322, and Glu-360 contribute to the NADP(+) site; these read VP, SR, and GL.

Belongs to the ferredoxin--NADP reductase type 1 family. As to quaternary structure, heterodimer with LFNR2. Component of high molecular weight thylakoid LFNRs-containing protein complexes containing LIR1, LFNR1, LFNR2, TIC62 and TROL proteins. Interacts directly with LFNR1 and LFNR2; LIR1 increases the affinity of LFNR1 and LFNR2 for TIC62 and subsequent thylakoid relocalization. Requires FAD as cofactor. In terms of processing, may form interchain disulfide bonds with LIR1.

The protein localises to the plastid. The protein resides in the chloroplast stroma. It is found in the chloroplast thylakoid membrane. The enzyme catalyses 2 reduced [2Fe-2S]-[ferredoxin] + NADP(+) + H(+) = 2 oxidized [2Fe-2S]-[ferredoxin] + NADPH. It functions in the pathway energy metabolism; photosynthesis. In terms of biological role, plays a key role in regulating the relative amounts of cyclic and non-cyclic electron flow to meet the demands of the plant for ATP and reducing power. This is Ferredoxin--NADP reductase, leaf isozyme 1, chloroplastic from Oryza sativa subsp. indica (Rice).